Consider the following 106-residue polypeptide: Putative regulatory protein MalR (106 aa).

The 95-residue stretch at 12–106 folds into the HTH hxlR-type domain; that stretch reads CSIEYTLSFM…NLMHKWGQEN (95 aa).

Its function is as follows. Potential regulator of the malBH genes. The sequence is that of Putative regulatory protein MalR (malR) from Fusobacterium mortiferum.